The chain runs to 721 residues: Probable acyl-activating enzyme 17, peroxisomal (721 aa).

Positions 719 to 721 match the Microbody targeting signal motif; sequence SKL.

Belongs to the ATP-dependent AMP-binding enzyme family. Expressed in leaves, stems and developing seeds.

It localises to the peroxisome. May act as an acid--thiol ligase that activates carboxylic acids by forming acyl-CoAs. This Arabidopsis thaliana (Mouse-ear cress) protein is Probable acyl-activating enzyme 17, peroxisomal (AAE17).